A 380-amino-acid chain; its full sequence is MKVFRQQLEQLGAQNQYRSIPDLIHQGRYITRENRKMLNMSSNDYLGLASDENLRRSFLQQYGGNFPSFTSSSSRLLTGNFPIYTDLEELVAQRFQRESALLFNSGYHANLGILPALTTTKSLILADKFVHASMIDGIRLSRCAFFRYRHNDYEHLKNLLEKNVGKFDRTFIVTESVFSMDGDVADLKQLVQLKKQFPNTYLYVDEAHAIGVYGQNGLGIAERDNLIAEIDLLVGTFGKALASVGAYAVCNQVLKECLINQMRPLIFSTALPPFNVAWTYFIFERLPQFSKERSHLEQLSAFLRREVAHRTQIMPSETCIVPYILGGNEATLAKAEYLQGQGYYCLPIRPPTVPKNTSRIRLSLTADMTTDEVRQFAACL.

Arginine 18 contributes to the substrate binding site. 106-107 is a binding site for pyridoxal 5'-phosphate; sequence GY. Substrate is bound at residue histidine 131. Pyridoxal 5'-phosphate-binding positions include serine 179, 205–208, and 236–239; these read DEAH and TFGK. Position 239 is an N6-(pyridoxal phosphate)lysine (lysine 239). Threonine 352 contributes to the substrate binding site.

The protein belongs to the class-II pyridoxal-phosphate-dependent aminotransferase family. BioF subfamily. In terms of assembly, homodimer. Requires pyridoxal 5'-phosphate as cofactor.

The catalysed reaction is 6-carboxyhexanoyl-[ACP] + L-alanine + H(+) = (8S)-8-amino-7-oxononanoate + holo-[ACP] + CO2. It participates in cofactor biosynthesis; biotin biosynthesis. In terms of biological role, catalyzes the decarboxylative condensation of pimeloyl-[acyl-carrier protein] and L-alanine to produce 8-amino-7-oxononanoate (AON), [acyl-carrier protein], and carbon dioxide. This chain is Putative 8-amino-7-oxononanoate synthase (bioF), found in Neisseria gonorrhoeae (strain NCCP11945).